The primary structure comprises 322 residues: Protein-L-isoaspartate O-methyltransferase (322 aa).

The tract at residues 1 to 101 (MSGERAKRFP…AKQGDRSAAP (101 aa)) is disordered. Residues 14–29 (EDLKREPRKPEGRVAE) show a composition bias toward basic and acidic residues. Composition is skewed to low complexity over residues 33–51 (AGDA…PAAA) and 76–91 (HAPA…PQGG). Serine 170 is a catalytic residue.

The protein belongs to the methyltransferase superfamily. L-isoaspartyl/D-aspartyl protein methyltransferase family.

Its subcellular location is the cytoplasm. The catalysed reaction is [protein]-L-isoaspartate + S-adenosyl-L-methionine = [protein]-L-isoaspartate alpha-methyl ester + S-adenosyl-L-homocysteine. Its function is as follows. Catalyzes the methyl esterification of L-isoaspartyl residues in peptides and proteins that result from spontaneous decomposition of normal L-aspartyl and L-asparaginyl residues. It plays a role in the repair and/or degradation of damaged proteins. In Burkholderia pseudomallei (strain 1106a), this protein is Protein-L-isoaspartate O-methyltransferase.